We begin with the raw amino-acid sequence, 32 residues long: Alpha-2-macroglobulin homolog (32 aa).

Positions 16–19 (CGEQ) form a cross-link, isoglutamyl cysteine thioester (Cys-Gln).

The protein belongs to the protease inhibitor I39 (alpha-2-macroglobulin) family. As to quaternary structure, homodimer; disulfide-linked.

Its subcellular location is the secreted. Its function is as follows. Is able to inhibit all four classes of proteinases by a unique 'trapping' mechanism. This protein has a peptide stretch, called the 'bait region' which contains specific cleavage sites for different proteinases. When a proteinase cleaves the bait region, a conformational change is induced in the protein which traps the proteinase. The entrapped enzyme remains active against low molecular weight substrates (activity against high molecular weight substrates is greatly reduced). Following cleavage in the bait region a thioester bond is hydrolyzed and mediates the covalent binding of the protein to the proteinase. This Pacifastacus leniusculus (Signal crayfish) protein is Alpha-2-macroglobulin homolog.